The primary structure comprises 565 residues: Polycomb protein EED (565 aa).

WD repeat units follow at residues 89–133 (DDGN…LYRT), 136–176 (GHGG…EKQP), 185–224 (GHSYDLLSVAFHDNGRYVLSAGHDQVINLWALPEFPNEHM), and 240–278 (IHNNLVDCVAFYGDLILSRACHEDTIVLWRIEGFSSDDP). The disordered stretch occupies residues 417 to 488 (VKKAPGAAGS…SASPDPDSPF (72 aa)). The segment covering 429–450 (GTAANGGHNNNNNNNNNNNNNN) has biased composition (low complexity). Residues 451–468 (HETGSQRSFSATNNLSNS) are compositionally biased toward polar residues. The WD 5 repeat unit spans residues 519–559 (IDGAFVGRQVGWSPEGEWCVVVGNGNRALIYQRWGKERGLG).

This sequence belongs to the WD repeat ESC family. Component of the polycomb repressive complex 2 (PRC2) that consists of four core subunits icluding EZH2, EED, SUZ12, and RBBP4, among which EZH2 is the catalytic subunit and which minimally requires EED and SUZ12 for catalysis.

The protein resides in the nucleus. Its function is as follows. Component of the of the Polycomb Repressive Complex 2 (PRC2), a histone H3 lysine methyltransferase responsible for generating mono-, di-, and tri-methylation on Lys27 (H3K27me1, H3K27me2 and H3K27me3). The tri-methylated form is known to be critical in gene repression, and its proper placement is essential in defining repression patterns during development. EED is not a catalytic subunit but is required for the complex regulation of histone H3 lysine methylation by EZH2. This is Polycomb protein EED from Chaetomium thermophilum (strain DSM 1495 / CBS 144.50 / IMI 039719) (Thermochaetoides thermophila).